Here is a 383-residue protein sequence, read N- to C-terminus: L-lactate dehydrogenase (383 aa).

The FMN hydroxy acid dehydrogenase domain occupies 1-380 (MIIASTFDYR…TCESLVNTDA (380 aa)). Y24 contributes to the substrate binding site. FMN contacts are provided by S106 and Q127. Position 129 (Y129) interacts with substrate. An FMN-binding site is contributed by T155. R164 lines the substrate pocket. FMN is bound at residue K251. H275 acts as the Proton acceptor in catalysis. R278 is a binding site for substrate. 306 to 330 (DSGVRSGLDVVRMIAQGADAVMIGR) serves as a coordination point for FMN.

It belongs to the FMN-dependent alpha-hydroxy acid dehydrogenase family. Requires FMN as cofactor.

The protein localises to the cell inner membrane. The catalysed reaction is (S)-lactate + A = pyruvate + AH2. Functionally, catalyzes the conversion of L-lactate to pyruvate. Is coupled to the respiratory chain. The chain is L-lactate dehydrogenase from Bartonella tribocorum (strain CIP 105476 / IBS 506).